A 161-amino-acid chain; its full sequence is Cytochrome c-type biogenesis protein CcmE (161 aa).

At 1-8 (MNPRRKKR) the chain is on the cytoplasmic side. The helical; Signal-anchor for type II membrane protein transmembrane segment at 9–29 (LTLAVALVFGLGATIGLMLYA) threads the bilayer. Over 30–161 (LSQNMDLFYT…SDEQKQGRVQ (132 aa)) the chain is Periplasmic. Heme is bound by residues H129 and Y133.

The protein belongs to the CcmE/CycJ family.

Its subcellular location is the cell inner membrane. Heme chaperone required for the biogenesis of c-type cytochromes. Transiently binds heme delivered by CcmC and transfers the heme to apo-cytochromes in a process facilitated by CcmF and CcmH. In Photobacterium profundum (strain SS9), this protein is Cytochrome c-type biogenesis protein CcmE.